The sequence spans 261 residues: Carnitinyl-CoA dehydratase (261 aa).

Catalysis depends on Glu-111, which acts as the Nucleophile. The Proton acceptor role is filled by Glu-131.

The protein belongs to the enoyl-CoA hydratase/isomerase family.

It catalyses the reaction (R)-carnitinyl-CoA = crotonobetainyl-CoA + H2O. It functions in the pathway amine and polyamine metabolism; carnitine metabolism. Catalyzes the reversible dehydration of L-carnitinyl-CoA to crotonobetainyl-CoA. The sequence is that of Carnitinyl-CoA dehydratase from Salmonella typhimurium (strain LT2 / SGSC1412 / ATCC 700720).